Consider the following 238-residue polypeptide: Cysteine-rich venom protein pseudechetoxin-like (238 aa).

The first 19 residues, 1-19, serve as a signal peptide directing secretion; it reads MIAFTVLLSLAAVLQQSSG. Positions 20 to 28 are excised as a propeptide; sequence TVDFASESS. Positions 38-164 constitute an SCP domain; sequence VDKHNDLRRS…STKYLYVCQY (127 aa). Cystine bridges form between C75-C153, C92-C165, C148-C162, C184-C191, C187-C196, C200-C233, C209-C227, and C218-C231. The ShKT domain maps to 200–233; sequence CKHNNDFSNCKALAKKSKCQTEWIKSKCPATCFC.

This sequence belongs to the CRISP family. As to expression, expressed by the venom gland.

Its subcellular location is the secreted. Its function is as follows. Blocks olfactory (CNGA2) and retinal (CNGA1) CNG channel currents. Does not affect neither depolarization- nor caffeine-induced contraction of smooth muscle. This chain is Cysteine-rich venom protein pseudechetoxin-like, found in Oxyuranus scutellatus scutellatus (Australian taipan).